A 175-amino-acid chain; its full sequence is Inorganic pyrophosphatase (175 aa).

Residues lysine 30, arginine 44, and tyrosine 56 each coordinate substrate. Mg(2+) is bound by residues aspartate 66, aspartate 71, and aspartate 103. Tyrosine 142 serves as a coordination point for substrate.

The protein belongs to the PPase family. In terms of assembly, homohexamer. Requires Mg(2+) as cofactor.

The protein localises to the cytoplasm. The catalysed reaction is diphosphate + H2O = 2 phosphate + H(+). Catalyzes the hydrolysis of inorganic pyrophosphate (PPi) forming two phosphate ions. This is Inorganic pyrophosphatase from Yersinia pestis.